The following is a 421-amino-acid chain: Gamma-glutamyl phosphate reductase (421 aa).

Belongs to the gamma-glutamyl phosphate reductase family.

It localises to the cytoplasm. The enzyme catalyses L-glutamate 5-semialdehyde + phosphate + NADP(+) = L-glutamyl 5-phosphate + NADPH + H(+). It participates in amino-acid biosynthesis; L-proline biosynthesis; L-glutamate 5-semialdehyde from L-glutamate: step 2/2. Its function is as follows. Catalyzes the NADPH-dependent reduction of L-glutamate 5-phosphate into L-glutamate 5-semialdehyde and phosphate. The product spontaneously undergoes cyclization to form 1-pyrroline-5-carboxylate. The polypeptide is Gamma-glutamyl phosphate reductase (Leifsonia xyli subsp. xyli (strain CTCB07)).